Consider the following 293-residue polypeptide: Bifunctional protein FolD (293 aa).

Residues 165 to 167 (GRS), Ser-190, and Ile-231 each bind NADP(+).

The protein belongs to the tetrahydrofolate dehydrogenase/cyclohydrolase family. In terms of assembly, homodimer.

It carries out the reaction (6R)-5,10-methylene-5,6,7,8-tetrahydrofolate + NADP(+) = (6R)-5,10-methenyltetrahydrofolate + NADPH. The catalysed reaction is (6R)-5,10-methenyltetrahydrofolate + H2O = (6R)-10-formyltetrahydrofolate + H(+). It functions in the pathway one-carbon metabolism; tetrahydrofolate interconversion. In terms of biological role, catalyzes the oxidation of 5,10-methylenetetrahydrofolate to 5,10-methenyltetrahydrofolate and then the hydrolysis of 5,10-methenyltetrahydrofolate to 10-formyltetrahydrofolate. In Parasynechococcus marenigrum (strain WH8102), this protein is Bifunctional protein FolD.